The following is a 133-amino-acid chain: Stage III sporulation protein AD (133 aa).

The next 3 membrane-spanning stretches (helical) occupy residues 2-22 (QIDI…SLIV), 29-49 (FAFL…VDQI), and 108-128 (ILIL…ILGL).

It is found in the cell membrane. The polypeptide is Stage III sporulation protein AD (spoIIIAD) (Bacillus subtilis (strain 168)).